Here is a 184-residue protein sequence, read N- to C-terminus: Putative pre-16S rRNA nuclease (184 aa).

Residues 1 to 23 (MFSSQHRLLYQPSGPDLSKNLDP) form a disordered region.

This sequence belongs to the YqgF nuclease family.

The protein resides in the cytoplasm. Functionally, could be a nuclease involved in processing of the 5'-end of pre-16S rRNA. This chain is Putative pre-16S rRNA nuclease, found in Mycobacterium leprae (strain Br4923).